We begin with the raw amino-acid sequence, 55 residues long: Large ribosomal subunit protein bL33 (55 aa).

It belongs to the bacterial ribosomal protein bL33 family.

This Rhodopseudomonas palustris (strain BisB5) protein is Large ribosomal subunit protein bL33.